Reading from the N-terminus, the 688-residue chain is G protein-coupled receptor kinase 3 (688 aa).

An N-terminal region spans residues 1–190 (MADLEAVLAD…ELNIHLSMND (190 aa)). One can recognise an RGS domain in the interval 54–175 (TFDKIFNQKI…MESEKFTRFC (122 aa)). Residues 191-453 (FSVHRIIGRG…ARELKEHIFF (263 aa)) form the Protein kinase domain. ATP is bound by residues 197 to 205 (IGRGGFGEV) and lysine 220. Aspartate 317 serves as the catalytic Proton acceptor. The region spanning 454–521 (KGIDWQYVYL…MISERWQQEV (68 aa)) is the AGC-kinase C-terminal domain. A PH domain is found at 558-652 (DCIMHGYMLK…WLKELTCTFN (95 aa)).

The protein belongs to the protein kinase superfamily. AGC Ser/Thr protein kinase family. GPRK subfamily. In terms of assembly, interacts with GIT1. In terms of processing, ubiquitinated. In terms of tissue distribution, expressed in brain cortex, hippocampus, striatum, hypothalamus, cerebellum and brainstem (at protein level).

The protein localises to the postsynapse. It is found in the presynapse. The catalysed reaction is [beta-adrenergic receptor] + ATP = [beta-adrenergic receptor]-phosphate + ADP + H(+). Functionally, specifically phosphorylates the agonist-occupied form of the beta-adrenergic and closely related receptors. This Rattus norvegicus (Rat) protein is G protein-coupled receptor kinase 3.